The following is an 804-amino-acid chain: G-type lectin S-receptor-like serine/threonine-protein kinase At1g61490 (804 aa).

The N-terminal stretch at 1–24 is a signal peptide; that stretch reads MGKKRIVFFACLLLFTVLLRFSYA. One can recognise a Bulb-type lectin domain in the interval 25-144; it reads GITTESPLSV…ASGRTLWESF (120 aa). Residues 25–425 lie on the Extracellular side of the membrane; sequence GITTESPLSV…SELGGNKRNK (401 aa). N-linked (GlcNAc...) asparagine glycosylation is found at N53, N94, N117, N134, N236, and N267. Residues 278-314 enclose the EGF-like domain; it reads PANSCDIYGVCGPFGLCIVSVPLKCKCLKGFVPHSTE. Intrachain disulfides connect C282/C294 and C288/C302. N320, N336, and N375 each carry an N-linked (GlcNAc...) asparagine glycan. One can recognise a PAN domain in the interval 333-415; that stretch reads CQGNSTGKDV…GEILSIRLAH (83 aa). 2 cysteine pairs are disulfide-bonded: C368–C389 and C372–C378. The chain crosses the membrane as a helical span at residues 426–446; the sequence is IIVASTVSLSLFVILTSAAFG. Over 447 to 804 the chain is Cytoplasmic; that stretch reads FWRYRVKHKA…EMTQSMILGR (358 aa). One can recognise a Protein kinase domain in the interval 490-775; the sequence is FSLSNKLGQG…DLPSPKQPTF (286 aa). Residues 496–504 and K518 each bind ATP; that span reads LGQGGFGSV. Phosphoserine is present on residues S524 and S539. The tract at residues 579–596 is caM-binding; the sequence is RKKLEVDWPKRFDIVQGI. Catalysis depends on D615, which acts as the Proton acceptor. A phosphoserine mark is found at S619 and S632. Phosphothreonine is present on T649. S692 is subject to Phosphoserine.

Belongs to the protein kinase superfamily. Ser/Thr protein kinase family.

The protein resides in the cell membrane. The catalysed reaction is L-seryl-[protein] + ATP = O-phospho-L-seryl-[protein] + ADP + H(+). It carries out the reaction L-threonyl-[protein] + ATP = O-phospho-L-threonyl-[protein] + ADP + H(+). The sequence is that of G-type lectin S-receptor-like serine/threonine-protein kinase At1g61490 from Arabidopsis thaliana (Mouse-ear cress).